The sequence spans 193 residues: Ion-translocating oxidoreductase complex subunit A (193 aa).

Helical transmembrane passes span 5-25 (LLLFVGTVLVNNFVLVKFLGL), 47-67 (FVMTLASVSAWVINTFILVPL), 72-92 (LRTLSFILVIAVVVQFTEMVV), 102-122 (LLGIFLPLITTNCAVLGVALL), 134-154 (AVYGFSAAAGFSLVMVLFAAI), and 171-191 (SIALITAGLMSLAFMGFTGLV).

It belongs to the NqrDE/RnfAE family. The complex is composed of six subunits: RnfA, RnfB, RnfC, RnfD, RnfE and RnfG.

Its subcellular location is the cell inner membrane. In terms of biological role, part of a membrane-bound complex that couples electron transfer with translocation of ions across the membrane. This chain is Ion-translocating oxidoreductase complex subunit A, found in Serratia proteamaculans (strain 568).